A 115-amino-acid chain; its full sequence is IEAAKSSNNCAVPPFVGDLPIAENKEVLSIWKDYKSGEDCSNQRRETQQVIDDLPDEVRAMVFGRLPSFLNGASTDVKKMFRAIMYNRTLNYDLKKQELSKLAEEILSKKQLAEF.

The protein is OV39 antigen (OV39) of Onchocerca volvulus.